The primary structure comprises 1987 residues: Transcriptional activator DEMETER (1987 aa).

Disordered regions lie at residues 246–378, 392–415, and 793–901; these read TGHE…NKSP, DLENPGDARQGDSESEIVQNSSGA, and MPPE…GPSG. Over residues 258–277 the composition is skewed to polar residues; that stretch reads SMQSIMDSSAVNATEATEQN. Basic and acidic residues predominate over residues 341–364; that stretch reads ATQEKVKSKETGSAKKKNLKESAT. The segment covering 813 to 829 has biased composition (polar residues); the sequence is NTASISKGASKGNSSPV. Basic residues predominate over residues 844–855; sequence PAKKGRAGRKKS. The interval 955–1054 is DEMETER; it reads KVDIDDETTR…AFMSLAARFP (100 aa). 2 disordered regions span residues 1324–1351 and 1439–1471; these read LPGMGLSGSSSAVQEHQDDTQHNQQDEM and TLADGKKPTSQWDSLRKDVEGNEGRQERNKNNM. Composition is skewed to basic and acidic residues over residues 1338–1351 and 1452–1469; these read EHQDDTQHNQQDEM and SLRKDVEGNEGRQERNKN. [4Fe-4S] cluster is bound by residues Cys1629, Cys1636, Cys1639, and Cys1645.

The protein belongs to the DNA glycosylase family. DEMETER subfamily. Requires [4Fe-4S] cluster as cofactor. As to expression, mainly expressed in immature flower buds, then decreases as the flower matures. Expressed in the ovule carpels, but not expressed in pollen stamens. Expressed in developing and mature ovules (stages 12-14), then strongly decreases after fertilization.

It localises to the nucleus. Transcriptional activator involved in gene imprinting. Catalyzes the release of 5-methylcytosine (5-meC) from DNA by a glycosylase/lyase mechanism. Allows the expression of the maternal copy of the imprinted MEA gene before fertilization, possibly by antagonizing or suppressing DNA methylation on target promoter. Probably acts by nicking the MEA promoter. Required for stable reproducible patterns of floral and vegetative development. The chain is Transcriptional activator DEMETER (DME) from Arabidopsis thaliana (Mouse-ear cress).